A 78-amino-acid polypeptide reads, in one-letter code: Large ribosomal subunit protein bL28 (78 aa).

Residues 1–31 (MAAHCQVTGAEPGFGHSISHSHRRNKRRFDP) are disordered.

It belongs to the bacterial ribosomal protein bL28 family.

The chain is Large ribosomal subunit protein bL28 from Paenarthrobacter aurescens (strain TC1).